Reading from the N-terminus, the 146-residue chain is 3-hydroxyacyl-[acyl-carrier-protein] dehydratase FabZ (146 aa).

Residue histidine 49 is part of the active site.

This sequence belongs to the thioester dehydratase family. FabZ subfamily.

The protein localises to the cytoplasm. It carries out the reaction a (3R)-hydroxyacyl-[ACP] = a (2E)-enoyl-[ACP] + H2O. Its function is as follows. Involved in unsaturated fatty acids biosynthesis. Catalyzes the dehydration of short chain beta-hydroxyacyl-ACPs and long chain saturated and unsaturated beta-hydroxyacyl-ACPs. This chain is 3-hydroxyacyl-[acyl-carrier-protein] dehydratase FabZ, found in Pseudomonas fluorescens (strain ATCC BAA-477 / NRRL B-23932 / Pf-5).